The following is a 78-amino-acid chain: Putative DNA-binding protein MT0521 (78 aa).

The H-T-H motif DNA-binding region spans 24 to 45; it reads LLTVAEVAALMRVSKMTVYRLV.

This is Putative DNA-binding protein MT0521 from Mycobacterium tuberculosis (strain CDC 1551 / Oshkosh).